The following is a 59-amino-acid chain: Large ribosomal subunit protein uL30 (59 aa).

This sequence belongs to the universal ribosomal protein uL30 family. Part of the 50S ribosomal subunit.

The sequence is that of Large ribosomal subunit protein uL30 from Proteus mirabilis (strain HI4320).